The following is a 289-amino-acid chain: Pre-mRNA-splicing factor cwf23 (289 aa).

Residues 9-74 (DYYELLGINE…QLRKAYDSER (66 aa)) form the J domain. The span at 129-148 (ESANLRRQRENRLREEQEQS) shows a compositional bias: basic and acidic residues. Disordered regions lie at residues 129–161 (ESANLRRQRENRLREEQEQSKRRKQETPSSKIS) and 269–289 (KQKHKQKQKENERKATSTMNA).

The protein belongs to the DnaJ family. As to quaternary structure, belongs to the 40S cdc5-associated complex (or cwf complex), a spliceosome sub-complex reminiscent of a late-stage spliceosome composed of the U2, U5 and U6 snRNAs and at least brr2, cdc5, cwf2/prp3, cwf3/syf1, cwf4/syf3, cwf5/ecm2, spp42/cwf6, cwf7/spf27, cwf8, cwf9, cwf10, cwf11, cwf12, prp45/cwf13, cwf14, cwf15, cwf16, cwf17, cwf18, cwf19, cwf20, cwf21, cwf22, cwf23, cwf24, cwf25, cwf26, cyp7/cwf27, cwf28, cwf29/ist3, lea1, msl1, prp5/cwf1, prp10, prp12/sap130, prp17, prp22, sap61, sap62, sap114, sap145, slu7, smb1, smd1, smd3, smf1, smg1 and syf2.

The protein resides in the cytoplasm. It is found in the nucleus. In terms of biological role, involved in pre-mRNA splicing. May be involved in endoplasmic reticulum-associated protein degradation (ERAD) and required for growth at low and high temperatures. The chain is Pre-mRNA-splicing factor cwf23 (cwf23) from Schizosaccharomyces pombe (strain 972 / ATCC 24843) (Fission yeast).